The sequence spans 309 residues: Dicarboxylate carrier SLC25A8 (309 aa).

Residues 1-16 (MVGFKATDVPPTATVK) lie on the Mitochondrial intermembrane side of the membrane. Solcar repeat units follow at residues 11–106 (PTAT…VKQF), 114–203 (ASIG…IKDA), and 212–297 (DDLP…LKRA). The tract at residues 16–63 (KFLGAGTAACIADLITFPLDTAKVRLQIQGESQGPVRATASAQYRGVM) is important for interaction with long-chain fatty acids. Residues 17-40 (FLGAGTAACIADLITFPLDTAKVR) traverse the membrane as a helical segment. Residues 41-77 (LQIQGESQGPVRATASAQYRGVMGTILTMVRTEGPRS) are Mitochondrial matrix-facing. The helical transmembrane segment at 78–103 (LYNGLVAGLQRQMSFASVRIGLYDSV) threads the bilayer. The Mitochondrial intermembrane segment spans residues 104-119 (KQFYTKGSEHASIGSR). A helical transmembrane segment spans residues 120–145 (LLAGSTTGALAVAVAQPTDVVKVRFQ). The Mitochondrial matrix segment spans residues 146 to 173 (AQARAGGGRRYQSTVNAYKTIAREEGFR). A helical transmembrane segment spans residues 174–199 (GLWKGTSPNVARNAIVNCAELVTYDL). Over 200–217 (IKDALLKANLMTDDLPCH) the chain is Mitochondrial intermembrane. The chain crosses the membrane as a helical span at residues 218 to 242 (FTSAFGAGFCTTVIASPVDVVKTRY). Topologically, residues 243-268 (MNSALGQYSSAGHCALTMLQKEGPRA) are mitochondrial matrix. Residues 269–294 (FYKGFMPSFLRLGSWNVVMFVTYEQL) traverse the membrane as a helical segment. Residues 278 to 285 (LRLGSWNV) form an important for interaction with long-chain fatty acids region. Residues 295 to 309 (KRALMAACTSREAPF) lie on the Mitochondrial intermembrane side of the membrane.

This sequence belongs to the mitochondrial carrier (TC 2.A.29) family. As to quaternary structure, homotetramer. Adopts an asymmetrical dimer of dimers functional form. As to expression, widely expressed in adult human tissues, including tissues rich in macrophages. Most expressed in white adipose tissue and skeletal muscle.

The protein localises to the mitochondrion inner membrane. It catalyses the reaction L-aspartate(out) + phosphate(in) + H(+)(in) = L-aspartate(in) + phosphate(out) + H(+)(out). The enzyme catalyses oxaloacetate(out) + phosphate(in) + H(+)(in) = oxaloacetate(in) + phosphate(out) + H(+)(out). It carries out the reaction (S)-malate(out) + phosphate(in) + H(+)(in) = (S)-malate(in) + phosphate(out) + H(+)(out). The catalysed reaction is malonate(out) + phosphate(in) + H(+)(in) = malonate(in) + phosphate(out) + H(+)(out). It catalyses the reaction sulfate(out) + phosphate(in) + H(+)(in) = sulfate(in) + phosphate(out) + H(+)(out). The enzyme catalyses (S)-malate(out) = (S)-malate(in). It carries out the reaction L-aspartate(out) = L-aspartate(in). The catalysed reaction is phosphate(in) = phosphate(out). It catalyses the reaction chloride(in) = chloride(out). The enzyme catalyses H(+)(in) = H(+)(out). It carries out the reaction a long-chain fatty acid(out) = a long-chain fatty acid(in). With respect to regulation, inhibited by pyridoxal- 5'-phosphate, bathophenanthroline, tannic acid, bromocresol purple, butylmalonate and phenylsuccinate. Proton conductance is activated by cardiolipin and long-chain free fatty acids and inhibited by purine nucleotides ATP and ADP. Chloride ion transporter activity is inhibited by long-chain free fatty acids. Functionally, antiporter that exports dicarboxylate intermediates of the Krebs cycle in exchange for phosphate plus a proton across the inner membrane of mitochondria, a process driven by mitochondrial motive force with an overall impact on glycolysis, glutaminolysis and glutathione-dependent redox balance. Continuous export of oxaloacetate and related four-carbon dicarboxylates from mitochondrial matrix into the cytosol negatively regulates the oxidation of acetyl-CoA substrates via the Krebs cycle, lowering the ATP/ADP ratio and reactive oxygen species (ROS) production. May mediate inducible proton entry into the mitochondrial matrix affecting ATP turnover as a protection mechanism against oxidative stress. The proton currents are most likely associated with fatty acid flipping across the inner membrane of mitochondria in a metabolic process regulated by free fatty acids and purine nucleotides. Regulates the use of glucose as a source of energy. Required for glucose-induced DRP1-dependent mitochondrial fission and neuron activation in the ventromedial nucleus of the hypothalamus (VMH). This mitochondrial adaptation mechanism modulates the VMH pool of glucose-excited neurons with an impact on systemic glucose homeostasis. Regulates ROS levels and metabolic reprogramming of macrophages during the resolution phase of inflammation. Attenuates ROS production in response to IL33 to preserve the integrity of the Krebs cycle required for persistent production of itaconate and subsequent GATA3-dependent differentiation of inflammation-resolving alternatively activated macrophages. Can unidirectionally transport anions including L-malate, L-aspartate, phosphate and chloride ions. Does not mediate adaptive thermogenesis. This is Dicarboxylate carrier SLC25A8 (UCP2) from Homo sapiens (Human).